A 172-amino-acid polypeptide reads, in one-letter code: Ribosome maturation factor RimM (172 aa).

The region spanning 96–168 (EGEFYYHEII…RVDVEIPEGL (73 aa)) is the PRC barrel domain.

It belongs to the RimM family. Binds ribosomal protein uS19.

The protein localises to the cytoplasm. An accessory protein needed during the final step in the assembly of 30S ribosomal subunit, possibly for assembly of the head region. Essential for efficient processing of 16S rRNA. May be needed both before and after RbfA during the maturation of 16S rRNA. It has affinity for free ribosomal 30S subunits but not for 70S ribosomes. The polypeptide is Ribosome maturation factor RimM (Streptococcus gordonii (strain Challis / ATCC 35105 / BCRC 15272 / CH1 / DL1 / V288)).